Reading from the N-terminus, the 185-residue chain is CDP-diacylglycerol--glycerol-3-phosphate 3-phosphatidyltransferase (185 aa).

A run of 4 helical transmembrane segments spans residues 7–26, 33–52, 89–108, and 151–172; these read IFLTIFRVILIPFFVIAFYL, FITTLIFFIAGVTDWLDGYL, FWITIPAIIMISREIIISAL, and IAAIILLYIAAILTIWSMIQYL.

It belongs to the CDP-alcohol phosphatidyltransferase class-I family.

Its subcellular location is the cell membrane. It carries out the reaction a CDP-1,2-diacyl-sn-glycerol + sn-glycerol 3-phosphate = a 1,2-diacyl-sn-glycero-3-phospho-(1'-sn-glycero-3'-phosphate) + CMP + H(+). The protein operates within phospholipid metabolism; phosphatidylglycerol biosynthesis; phosphatidylglycerol from CDP-diacylglycerol: step 1/2. Functionally, this protein catalyzes the committed step to the synthesis of the acidic phospholipids. The chain is CDP-diacylglycerol--glycerol-3-phosphate 3-phosphatidyltransferase (pgsA) from Haemophilus influenzae (strain ATCC 51907 / DSM 11121 / KW20 / Rd).